The sequence spans 370 residues: Tyrosine-protein kinase transforming protein SEA (370 aa).

One can recognise a Protein kinase domain in the interval 60 to 323 (THRSRVIGRG…GLVCELERVL (264 aa)). Residues 66–74 (IGRGHFGSV) and Lys92 each bind ATP. Residue Asp186 is the Proton acceptor of the active site. Phosphotyrosine; by autocatalysis is present on Tyr216. The disordered stretch occupies residues 345-370 (PPFPPAPRGQLPDSEDEEDEEEEVAE). A compositionally biased stretch (acidic residues) spans 357–370 (DSEDEEDEEEEVAE).

Belongs to the protein kinase superfamily. Tyr protein kinase family.

The catalysed reaction is L-tyrosyl-[protein] + ATP = O-phospho-L-tyrosyl-[protein] + ADP + H(+). The sequence is that of Tyrosine-protein kinase transforming protein SEA (V-SEA) from Galliformes.